A 337-amino-acid polypeptide reads, in one-letter code: Cobalt-precorrin-5B C(1)-methyltransferase (337 aa).

This sequence belongs to the CbiD family.

It catalyses the reaction Co-precorrin-5B + S-adenosyl-L-methionine = Co-precorrin-6A + S-adenosyl-L-homocysteine. The protein operates within cofactor biosynthesis; adenosylcobalamin biosynthesis; cob(II)yrinate a,c-diamide from sirohydrochlorin (anaerobic route): step 6/10. Functionally, catalyzes the methylation of C-1 in cobalt-precorrin-5B to form cobalt-precorrin-6A. This chain is Cobalt-precorrin-5B C(1)-methyltransferase, found in Methanoculleus marisnigri (strain ATCC 35101 / DSM 1498 / JR1).